A 424-amino-acid polypeptide reads, in one-letter code: Protein CLP1 homolog (424 aa).

Residues E19, K60, and 122–127 (DVGKST) contribute to the ATP site.

The protein belongs to the Clp1 family. Clp1 subfamily.

It is found in the nucleus. Functionally, required for endonucleolytic cleavage during polyadenylation-dependent pre-mRNA 3'-end formation. This is Protein CLP1 homolog (cbc) from Aedes aegypti (Yellowfever mosquito).